The sequence spans 265 residues: Phosphonates import ATP-binding protein PhnC (265 aa).

In terms of domain architecture, ABC transporter spans Leu18–Glu262. Gly51–Ser58 is an ATP binding site.

The protein belongs to the ABC transporter superfamily. Phosphonates importer (TC 3.A.1.9.1) family. The complex is composed of two ATP-binding proteins (PhnC), two transmembrane proteins (PhnE) and a solute-binding protein (PhnD).

It localises to the cell inner membrane. It catalyses the reaction phosphonate(out) + ATP + H2O = phosphonate(in) + ADP + phosphate + H(+). Part of the ABC transporter complex PhnCDE involved in phosphonates import. Responsible for energy coupling to the transport system. This chain is Phosphonates import ATP-binding protein PhnC, found in Nitratidesulfovibrio vulgaris (strain ATCC 29579 / DSM 644 / CCUG 34227 / NCIMB 8303 / VKM B-1760 / Hildenborough) (Desulfovibrio vulgaris).